The primary structure comprises 508 residues: Alpha-amylase (508 aa).

An N-terminal signal peptide occupies residues 1–19; it reads MLSLIIAACCVTVALAGTF. The cysteines at positions 46 and 102 are disulfide-linked. Residues Asn-116, Arg-173, and Asp-182 each contribute to the Ca(2+) site. Cys-156 and Cys-175 are oxidised to a cystine. Arg-210 contributes to the chloride binding site. Residue Asp-212 is the Nucleophile of the active site. His-216 is a Ca(2+) binding site. Glu-248 functions as the Proton donor in the catalytic mechanism. 2 residues coordinate chloride: Asn-311 and Arg-349. 2 cysteine pairs are disulfide-bonded: Cys-383/Cys-389 and Cys-455/Cys-467.

The protein belongs to the glycosyl hydrolase 13 family. Monomer. Ca(2+) serves as cofactor. It depends on chloride as a cofactor.

The catalysed reaction is Endohydrolysis of (1-&gt;4)-alpha-D-glucosidic linkages in polysaccharides containing three or more (1-&gt;4)-alpha-linked D-glucose units.. In Pecten maximus (King scallop), this protein is Alpha-amylase.